We begin with the raw amino-acid sequence, 316 residues long: 4-hydroxyphenylacetate decarboxylase activating enzyme (316 aa).

In terms of domain architecture, Radical SAM core spans 20-307; that stretch reads HDGPGCRTTV…QDIFLDNGIA (288 aa). Residues C34, C38, C41, C60, C66, C69, and C105 each contribute to the [4Fe-4S] cluster site. 40–42 serves as a coordination point for S-adenosyl-L-methionine; it reads WCA. Positions 84–115 constitute a 4Fe-4S ferredoxin-type domain; the sequence is NKPVIDWNICKDCESFECVNSCYYNAFKLCAK. S-adenosyl-L-methionine-binding positions include G144, 193–195, and H267; that span reads DIK.

It belongs to the organic radical-activating enzymes family. As to quaternary structure, monomer. The cofactor is [4Fe-4S] cluster.

It carries out the reaction glycyl-[protein] + reduced [flavodoxin] + S-adenosyl-L-methionine = glycin-2-yl radical-[protein] + semiquinone [flavodoxin] + 5'-deoxyadenosine + L-methionine + H(+). Catalyzes activation of 4-hydroxyphenylacetate decarboxylase under anaerobic conditions by generation of an organic free radical on a glycine residue, via a homolytic cleavage of S-adenosyl-L-methionine (SAM). This is 4-hydroxyphenylacetate decarboxylase activating enzyme from Clostridioides difficile (strain CD196) (Peptoclostridium difficile).